We begin with the raw amino-acid sequence, 703 residues long: Cyclomaltodextrin glucanotransferase (703 aa).

A signal peptide spans Met-1 to Ala-29. The tract at residues Asp-30–Pro-160 is A1. Asp-52, Asn-54, Asn-57, and Asn-58 together coordinate Ca(2+). Cysteines 68 and 75 form a disulfide. Ca(2+) contacts are provided by Gly-76 and Asp-78. A substrate-binding site is contributed by Tyr-122–Trp-123. Asn-161 serves as a coordination point for Ca(2+). The segment at Asn-161 to Leu-224 is b. Residue His-162 coordinates substrate. Residue Ile-212 coordinates Ca(2+). Asn-215 to Asp-218 serves as a coordination point for substrate. Asp-221 serves as a coordination point for Ca(2+). The tract at residues Asn-225–Tyr-428 is A2. Arg-249 contacts substrate. The active-site Nucleophile is the Asp-251. Residue Lys-254–His-255 participates in substrate binding. His-255 is a Ca(2+) binding site. The active-site Proton donor is the Glu-279. 3 residues coordinate substrate: His-349, Asp-393, and Arg-397. Residues Gly-429–Pro-516 are c. The tract at residues Ser-517–Leu-600 is d. The IPT/TIG domain maps to Pro-520–Glu-598. One can recognise a CBM20 domain in the interval Val-599 to Trp-703. Residues Ser-601–Trp-703 are e.

It belongs to the glycosyl hydrolase 13 family. As to quaternary structure, monomer. It depends on Ca(2+) as a cofactor.

It localises to the secreted. The enzyme catalyses Cyclizes part of a (1-&gt;4)-alpha-D-glucan chain by formation of a (1-&gt;4)-alpha-D-glucosidic bond.. This Bacillus sp. (strain 1-1) protein is Cyclomaltodextrin glucanotransferase (cgt).